We begin with the raw amino-acid sequence, 238 residues long: tRNA (guanine-N(7)-)-methyltransferase (238 aa).

Residues glutamate 68, glutamate 93, aspartate 120, and aspartate 143 each coordinate S-adenosyl-L-methionine. The active site involves aspartate 143. Substrate contacts are provided by residues lysine 147, aspartate 179, and 216–219 (TKFE).

The protein belongs to the class I-like SAM-binding methyltransferase superfamily. TrmB family.

The enzyme catalyses guanosine(46) in tRNA + S-adenosyl-L-methionine = N(7)-methylguanosine(46) in tRNA + S-adenosyl-L-homocysteine. Its pathway is tRNA modification; N(7)-methylguanine-tRNA biosynthesis. Catalyzes the formation of N(7)-methylguanine at position 46 (m7G46) in tRNA. In Shewanella woodyi (strain ATCC 51908 / MS32), this protein is tRNA (guanine-N(7)-)-methyltransferase.